The primary structure comprises 253 residues: 5'/3'-nucleotidase SurE (253 aa).

4 residues coordinate a divalent metal cation: Asp-8, Asp-9, Ser-39, and Asn-92.

The protein belongs to the SurE nucleotidase family. The cofactor is a divalent metal cation.

The protein resides in the cytoplasm. It catalyses the reaction a ribonucleoside 5'-phosphate + H2O = a ribonucleoside + phosphate. The enzyme catalyses a ribonucleoside 3'-phosphate + H2O = a ribonucleoside + phosphate. It carries out the reaction [phosphate](n) + H2O = [phosphate](n-1) + phosphate + H(+). Functionally, nucleotidase with a broad substrate specificity as it can dephosphorylate various ribo- and deoxyribonucleoside 5'-monophosphates and ribonucleoside 3'-monophosphates with highest affinity to 3'-AMP. Also hydrolyzes polyphosphate (exopolyphosphatase activity) with the preference for short-chain-length substrates (P20-25). Might be involved in the regulation of dNTP and NTP pools, and in the turnover of 3'-mononucleotides produced by numerous intracellular RNases (T1, T2, and F) during the degradation of various RNAs. This chain is 5'/3'-nucleotidase SurE, found in Salmonella typhimurium (strain LT2 / SGSC1412 / ATCC 700720).